The primary structure comprises 476 residues: ATP synthase subunit beta (476 aa).

152–159 provides a ligand contact to ATP; the sequence is GGAGVGKT.

Belongs to the ATPase alpha/beta chains family. F-type ATPases have 2 components, CF(1) - the catalytic core - and CF(0) - the membrane proton channel. CF(1) has five subunits: alpha(3), beta(3), gamma(1), delta(1), epsilon(1). CF(0) has three main subunits: a(1), b(2) and c(9-12). The alpha and beta chains form an alternating ring which encloses part of the gamma chain. CF(1) is attached to CF(0) by a central stalk formed by the gamma and epsilon chains, while a peripheral stalk is formed by the delta and b chains.

The protein localises to the cell inner membrane. It carries out the reaction ATP + H2O + 4 H(+)(in) = ADP + phosphate + 5 H(+)(out). In terms of biological role, produces ATP from ADP in the presence of a proton gradient across the membrane. The catalytic sites are hosted primarily by the beta subunits. This chain is ATP synthase subunit beta, found in Acidiphilium cryptum (strain JF-5).